The chain runs to 235 residues: Thiamine import ATP-binding protein ThiQ (235 aa).

Positions 2-230 constitute an ABC transporter domain; that stretch reads LKLENLTYRY…TVPEAAILGM (229 aa). 32–39 is an ATP binding site; sequence GPSGAGKS.

Belongs to the ABC transporter superfamily. Thiamine importer (TC 3.A.1.19.1) family. The complex is composed of two ATP-binding proteins (ThiQ), two transmembrane proteins (ThiP) and a solute-binding protein (ThiB).

Its subcellular location is the cell inner membrane. It carries out the reaction thiamine(out) + ATP + H2O = thiamine(in) + ADP + phosphate + H(+). Functionally, part of the ABC transporter complex ThiBPQ involved in thiamine import. Responsible for energy coupling to the transport system. The protein is Thiamine import ATP-binding protein ThiQ of Photorhabdus laumondii subsp. laumondii (strain DSM 15139 / CIP 105565 / TT01) (Photorhabdus luminescens subsp. laumondii).